The sequence spans 898 residues: Vacuolar protein sorting-associated protein 41 homolog (898 aa).

A compositionally biased stretch (basic and acidic residues) spans 1-10 (MDESNDKENE). The disordered stretch occupies residues 1–35 (MDESNDKENEFGDSFLEDSGDITRTTEDEDEAPLE). One copy of the CHCR repeat lies at 614-756 (LRLLLDNADS…VADFPTHFSQ (143 aa)). The RING-type; atypical zinc-finger motif lies at 835 to 890 (CSLCSQVIMNTGQDMIPRKFNDIKVFKCGHIFHLTCSASEIDRRQMIEDGICIACS).

This sequence belongs to the VPS41 family. In terms of assembly, probable component of the homotypic fusion and vacuole protein sorting (HOPS) complex consisting of the core class C Vps proteins vps-11, vps-16, vps-18, and which further associates with vps-33.1, vps-39 and vps-41.

The protein resides in the endosome membrane. It is found in the late endosome. It localises to the lysosome. Its subcellular location is the golgi apparatus. The protein localises to the trans-Golgi network. The protein resides in the early endosome. It is found in the cytoplasmic vesicle. It localises to the clathrin-coated vesicle. Plays a role in vesicle-mediated protein trafficking to lysosomal compartments including the endocytic membrane transport pathways. Believed to act in part as a core component of the putative HOPS endosomal tethering complex which is proposed to be involved in the rab-5-to-rab-7 endosome conversion probably implicating sand-1, and via binding SNAREs and SNARE complexes to mediate tethering and docking events during SNARE-mediated membrane fusion. The HOPS complex is proposed to be recruited to rab-7 on the late endosomal membrane and to regulate late endocytic, phagocytic and autophagic traffic towards lysosomes. Within the HOPS complex, contributes to the normal development of gut granules in the adult intestine. May mediate the tethering of autophagosomes with lysosomes. Has a role in the negative regulation of apoptosis. Required for uptake of exogenous dsRNA which is used in experimental RNA silencing. In Caenorhabditis briggsae, this protein is Vacuolar protein sorting-associated protein 41 homolog.